A 292-amino-acid chain; its full sequence is Glycine--tRNA ligase alpha subunit (292 aa).

Belongs to the class-II aminoacyl-tRNA synthetase family. In terms of assembly, tetramer of two alpha and two beta subunits.

It localises to the cytoplasm. The enzyme catalyses tRNA(Gly) + glycine + ATP = glycyl-tRNA(Gly) + AMP + diphosphate. The sequence is that of Glycine--tRNA ligase alpha subunit from Synechococcus elongatus (strain ATCC 33912 / PCC 7942 / FACHB-805) (Anacystis nidulans R2).